The sequence spans 265 residues: Phosphatidylserine decarboxylase proenzyme (265 aa).

Residue Ser-183 is the Schiff-base intermediate with substrate; via pyruvic acid of the active site. Pyruvic acid (Ser); by autocatalysis is present on Ser-183. The interval Pro-218–Ser-242 is disordered.

Belongs to the phosphatidylserine decarboxylase family. PSD-A subfamily. As to quaternary structure, heterodimer of a large membrane-associated beta subunit and a small pyruvoyl-containing alpha subunit. Pyruvate serves as cofactor. Post-translationally, is synthesized initially as an inactive proenzyme. Formation of the active enzyme involves a self-maturation process in which the active site pyruvoyl group is generated from an internal serine residue via an autocatalytic post-translational modification. Two non-identical subunits are generated from the proenzyme in this reaction, and the pyruvate is formed at the N-terminus of the alpha chain, which is derived from the carboxyl end of the proenzyme. The post-translation cleavage follows an unusual pathway, termed non-hydrolytic serinolysis, in which the side chain hydroxyl group of the serine supplies its oxygen atom to form the C-terminus of the beta chain, while the remainder of the serine residue undergoes an oxidative deamination to produce ammonia and the pyruvoyl prosthetic group on the alpha chain.

The protein localises to the cell membrane. The catalysed reaction is a 1,2-diacyl-sn-glycero-3-phospho-L-serine + H(+) = a 1,2-diacyl-sn-glycero-3-phosphoethanolamine + CO2. Its pathway is phospholipid metabolism; phosphatidylethanolamine biosynthesis; phosphatidylethanolamine from CDP-diacylglycerol: step 2/2. In terms of biological role, catalyzes the formation of phosphatidylethanolamine (PtdEtn) from phosphatidylserine (PtdSer). This chain is Phosphatidylserine decarboxylase proenzyme, found in Neisseria meningitidis serogroup C (strain 053442).